The sequence spans 326 residues: tRNA N6-adenosine threonylcarbamoyltransferase (326 aa).

H111 and H115 together coordinate Fe cation. Residues 134–138 (TVSGG), D167, G180, D184, and N268 each bind substrate. D293 contributes to the Fe cation binding site.

Belongs to the KAE1 / TsaD family. Requires Fe(2+) as cofactor.

It is found in the cytoplasm. The catalysed reaction is L-threonylcarbamoyladenylate + adenosine(37) in tRNA = N(6)-L-threonylcarbamoyladenosine(37) in tRNA + AMP + H(+). Its function is as follows. Required for the formation of a threonylcarbamoyl group on adenosine at position 37 (t(6)A37) in tRNAs that read codons beginning with adenine. Is involved in the transfer of the threonylcarbamoyl moiety of threonylcarbamoyl-AMP (TC-AMP) to the N6 group of A37, together with TsaE and TsaB. TsaD likely plays a direct catalytic role in this reaction. The polypeptide is tRNA N6-adenosine threonylcarbamoyltransferase (Dehalococcoides mccartyi (strain ATCC BAA-2100 / JCM 16839 / KCTC 5957 / BAV1)).